The chain runs to 704 residues: MLKLFSAFRKDKIWDFDGGIHPPEMKTQSNGTPLRQVPLAPRFVIPLKQHIGAEGELCVSVGDRVLRGQALTRGRGRMLPVHAPTSGTVIAIAPHSTAHPSALAELSVIIDADGEDRWIEREGWSDYRAHSREALIERIHQYGVAGLGGAGFPTGVKLQGGGDKITTLIINAAECEPYITADDRLMQDCAAQIVEGIRILAHILQPREVLIGIEDNKPQAISMLRAVLADAHDISLRVIPTKYPSGGAKQLTQILTGKQVPHGGRSSDIGVLMQNVGTAYAVKRAVVDGEPITERVVTLTGEAVSRPGNVWARLGTPVRHLLNDAGFCPSADQMVIMGGPLMGFPLPWLDVPVVKITNCLLAPSVTEMGAPQEEKSCIRCSACADACPADLLPQQLYWFSKGQQHDKATAHHIADCIECGACAWVCPSNIPLVQYFRQEKAEINAIRLEEKRAAEAKARFEARQARLEREKAARLARHKSAAVQPAAKDQDAIAAALARVKEKQAQATQPVVIQAGSLPDNSAVIAAREARKAQARAKQAAHPVADSAISGGDPRKAAVEAAIARAKARKQEQQAGSEPAEPVDPRKAAVEAAIARAKARKQEQQAGSEPAEPVDPRKAAVEAAIARAKARKQEQQAGGEPAEPVDPRKAAVEAAIARAKARKQEQQAGSEPAEPADPRKAAVAAAIARVQAKKAAQQQVVNED.

2 4Fe-4S ferredoxin-type domains span residues 368 to 397 (MGAP…QQLY) and 407 to 436 (KATA…VQYF). Residues C377, C380, C383, C387, C416, C419, C422, and C426 each contribute to the [4Fe-4S] cluster site. A disordered region spans residues 534–682 (QARAKQAAHP…AEPADPRKAA (149 aa)).

The protein belongs to the 4Fe4S bacterial-type ferredoxin family. RnfC subfamily. In terms of assembly, the complex is composed of six subunits: RsxA, RsxB, RsxC, RsxD, RsxE and RsxG. The cofactor is [4Fe-4S] cluster.

The protein localises to the cell inner membrane. Its function is as follows. Part of a membrane-bound complex that couples electron transfer with translocation of ions across the membrane. Required to maintain the reduced state of SoxR. This is Ion-translocating oxidoreductase complex subunit C from Salmonella enteritidis PT4 (strain P125109).